Consider the following 578-residue polypeptide: Proline--tRNA ligase (578 aa).

It belongs to the class-II aminoacyl-tRNA synthetase family. ProS type 1 subfamily. In terms of assembly, homodimer.

It is found in the cytoplasm. It carries out the reaction tRNA(Pro) + L-proline + ATP = L-prolyl-tRNA(Pro) + AMP + diphosphate. Its function is as follows. Catalyzes the attachment of proline to tRNA(Pro) in a two-step reaction: proline is first activated by ATP to form Pro-AMP and then transferred to the acceptor end of tRNA(Pro). As ProRS can inadvertently accommodate and process non-cognate amino acids such as alanine and cysteine, to avoid such errors it has two additional distinct editing activities against alanine. One activity is designated as 'pretransfer' editing and involves the tRNA(Pro)-independent hydrolysis of activated Ala-AMP. The other activity is designated 'posttransfer' editing and involves deacylation of mischarged Ala-tRNA(Pro). The misacylated Cys-tRNA(Pro) is not edited by ProRS. In Burkholderia cenocepacia (strain ATCC BAA-245 / DSM 16553 / LMG 16656 / NCTC 13227 / J2315 / CF5610) (Burkholderia cepacia (strain J2315)), this protein is Proline--tRNA ligase.